Here is a 92-residue protein sequence, read N- to C-terminus: Protein OPG096 (92 aa).

A run of 2 helical transmembrane segments spans residues 39-59 (PLIR…IFTV) and 67-87 (QILL…LLYT).

Belongs to the orthopoxvirus OPG096 family. In terms of assembly, interacts with OPG158.

The protein localises to the virion membrane. It is found in the host cytoplasm. It localises to the host endoplasmic reticulum membrane. Its function is as follows. Early protein involved in virion morphogenesis. Participates in the formation and elongation of crescent-shaped membrane precursors of immature virions in cytoplasmic factories. The protein is Protein OPG096 (OPG096) of Monkeypox virus.